A 345-amino-acid chain; its full sequence is L-rhamnose-proton symporter (345 aa).

Helical transmembrane passes span 4-24, 38-58, 68-88, 101-121, 131-151, 175-195, 214-234, 259-279, 290-310, and 323-343; these read AITMGILWHLIGAASAACFYA, WSVGGVVSWLILPWVVSALLL, FSAATLLPVFLFGAMWGIGNI, MGIGIAIGITLIVGTLMTPLL, TAGGRMTLLGVFVALVGVAIV, LVLAVLCGVFSAGMSFAMDAA, LPSYVVIMGGGALINLGFCFI, VLLSALGGLMWYLQFFFYAWG, ISWMLHMSFYVLCGGIVGLLL, and VLSLGCVVIIVAANIVGLGMA.

This sequence belongs to the L-rhamnose transporter (TC 2.A.7.6) family.

The protein resides in the cell inner membrane. The catalysed reaction is L-rhamnopyranose(in) + H(+)(in) = L-rhamnopyranose(out) + H(+)(out). Its function is as follows. Uptake of L-rhamnose across the cytoplasmic membrane with the concomitant transport of protons into the cell (symport system). This Cronobacter sakazakii (strain ATCC BAA-894) (Enterobacter sakazakii) protein is L-rhamnose-proton symporter.